Here is a 434-residue protein sequence, read N- to C-terminus: Nicotinate phosphoribosyltransferase (434 aa).

H242 bears the Phosphohistidine; by autocatalysis mark.

The protein belongs to the NAPRTase family. Post-translationally, transiently phosphorylated on a His residue during the reaction cycle. Phosphorylation strongly increases the affinity for substrates and increases the rate of nicotinate D-ribonucleotide production. Dephosphorylation regenerates the low-affinity form of the enzyme, leading to product release.

It catalyses the reaction nicotinate + 5-phospho-alpha-D-ribose 1-diphosphate + ATP + H2O = nicotinate beta-D-ribonucleotide + ADP + phosphate + diphosphate. The protein operates within cofactor biosynthesis; NAD(+) biosynthesis; nicotinate D-ribonucleotide from nicotinate: step 1/1. Its function is as follows. Catalyzes the synthesis of beta-nicotinate D-ribonucleotide from nicotinate and 5-phospho-D-ribose 1-phosphate at the expense of ATP. The sequence is that of Nicotinate phosphoribosyltransferase from Bradyrhizobium diazoefficiens (strain JCM 10833 / BCRC 13528 / IAM 13628 / NBRC 14792 / USDA 110).